We begin with the raw amino-acid sequence, 120 residues long: uncharacterized protein (120 aa).

This is an uncharacterized protein from Archaeoglobus fulgidus (strain ATCC 49558 / DSM 4304 / JCM 9628 / NBRC 100126 / VC-16).